The primary structure comprises 244 residues: tRNA (guanine-N(1)-)-methyltransferase (244 aa).

S-adenosyl-L-methionine is bound by residues glycine 112 and 131–136 (LGDFIL). The disordered stretch occupies residues 211-244 (IKRTSDRRPDLLEKWQQEKKPGSREQGSREQGEK).

Belongs to the RNA methyltransferase TrmD family. As to quaternary structure, homodimer.

The protein resides in the cytoplasm. The enzyme catalyses guanosine(37) in tRNA + S-adenosyl-L-methionine = N(1)-methylguanosine(37) in tRNA + S-adenosyl-L-homocysteine + H(+). Specifically methylates guanosine-37 in various tRNAs. The chain is tRNA (guanine-N(1)-)-methyltransferase from Trichormus variabilis (strain ATCC 29413 / PCC 7937) (Anabaena variabilis).